We begin with the raw amino-acid sequence, 147 residues long: Cyanate hydratase (147 aa).

Active-site residues include arginine 88, glutamate 91, and serine 114.

The protein belongs to the cyanase family.

It catalyses the reaction cyanate + hydrogencarbonate + 3 H(+) = NH4(+) + 2 CO2. Its function is as follows. Catalyzes the reaction of cyanate with bicarbonate to produce ammonia and carbon dioxide. This chain is Cyanate hydratase, found in Cupriavidus necator (strain ATCC 17699 / DSM 428 / KCTC 22496 / NCIMB 10442 / H16 / Stanier 337) (Ralstonia eutropha).